Consider the following 2090-residue polypeptide: Dysferlin (2090 aa).

The 101-residue stretch at 1–101 (MLRVFILFAE…LATPSLSASF (101 aa)) folds into the C2 1 domain. The Cytoplasmic portion of the chain corresponds to 1 to 2056 (MLRVFILFAE…FILWRRFRCA (2056 aa)). Ca(2+) contacts are provided by aspartate 18, isoleucine 19, aspartate 21, and asparagine 40. Residues 130 to 217 (VPLFPPPASL…SAPPRKLLSD (88 aa)) are disordered. The segment covering 155 to 172 (GGEEDTEDQGLTGDEAEP) has biased composition (acidic residues). Glycine 164 carries the post-translational modification Phosphoserine. Threonine 166 is modified (phosphothreonine). At glycine 167 the chain carries Phosphoserine. Pro residues predominate over residues 188 to 199 (PRKPPSHPPPHY). C2 domains are found at residues 206–323 (RSSA…RKWL), 362–498 (DKED…EEEP), 1146–1272 (GVNR…PLTR), 1320–1448 (PPPQ…AESP), 1571–1689 (PMPP…ARCG), and 1805–1953 (GRPG…EKCS). Position 209 is a phosphoserine (alanine 209). Proline 219 is subject to Phosphothreonine. 9 residues coordinate Ca(2+): aspartate 411, aspartate 419, aspartate 467, aspartate 469, aspartate 475, aspartate 1178, aspartate 1184, aspartate 1240, and aspartate 1242. The Ca(2+) site is built by aspartate 1604, aspartate 1610, aspartate 1659, aspartate 1661, aspartate 1924, serine 1927, and aspartate 1930. The interval 2005-2027 (SEHEERPAGQGRDEPNMNPKLED) is disordered. A helical membrane pass occupies residues 2057–2077 (IILFIILFILLLFLGVFVYAF). Topologically, residues 2078–2090 (PNYAAMKLVKPFR) are extracellular.

It belongs to the ferlin family. As to quaternary structure, interacts with CAV3. Interacts with AHNAK; the interaction is direct and Ca(2+)-independent. Interacts with AHNAK2; the interaction is direct and Ca(2+)-independent. Interacts with ANXA1; the interaction is Ca(2+)- and injury state-dependent. Interacts with ANXA2; the interaction is Ca(2+)- and injury state-dependent. Interacts with CACNA1S and PARVB. Interacts with TRIM72/MG53; interaction is required for transport to sites of cell injury during repair patch formation. Interacts with RIPOR2; this interaction occurs during early myogenic differentiation. It depends on Ca(2+) as a cofactor. In terms of tissue distribution, expressed in skeletal and cardiac muscles (at protein level). Expressed in skeletal muscle and heart. Also found in brain, liver and kidney.

Its subcellular location is the cell membrane. The protein localises to the sarcolemma. It is found in the cytoplasmic vesicle membrane. In terms of biological role, key calcium ion sensor involved in the Ca(2+)-triggered synaptic vesicle-plasma membrane fusion. Plays a role in the sarcolemma repair mechanism of both skeletal muscle and cardiomyocytes that permits rapid resealing of membranes disrupted by mechanical stress. The protein is Dysferlin (Dysf) of Mus musculus (Mouse).